Consider the following 324-residue polypeptide: Beta-ketoacyl-[acyl-carrier-protein] synthase III (324 aa).

Cys-112 is a catalytic residue. A disordered region spans residues 181 to 202 (TDGSRGQNLTSGNNPLRSPFSD). Polar residues predominate over residues 184-196 (SRGQNLTSGNNPL). The active site involves His-249. An ACP-binding region spans residues 250–254 (QANRR). Asn-279 is a catalytic residue.

Belongs to the thiolase-like superfamily. FabH family. In terms of assembly, homodimer.

It localises to the cytoplasm. It carries out the reaction malonyl-[ACP] + acetyl-CoA + H(+) = 3-oxobutanoyl-[ACP] + CO2 + CoA. It functions in the pathway lipid metabolism; fatty acid biosynthesis. In terms of biological role, catalyzes the condensation reaction of fatty acid synthesis by the addition to an acyl acceptor of two carbons from malonyl-ACP. Catalyzes the first condensation reaction which initiates fatty acid synthesis and may therefore play a role in governing the total rate of fatty acid production. Possesses both acetoacetyl-ACP synthase and acetyl transacylase activities. Its substrate specificity determines the biosynthesis of branched-chain and/or straight-chain of fatty acids. In Streptococcus uberis (strain ATCC BAA-854 / 0140J), this protein is Beta-ketoacyl-[acyl-carrier-protein] synthase III.